The primary structure comprises 139 residues: Cystatin-1 (139 aa).

Positions 1–22 (MHSRLPVPASLCLLLLLPSVLP) are cleaved as a signal peptide. Positions 27-127 (GGLSPRDVTD…CHFEVWSRPW (101 aa)) constitute a Cystatin domain. The short motif at 71-75 (QVVSG) is the Secondary area of contact element. 2 disulfide bridges follow: Cys-89-Cys-105 and Cys-118-Cys-138.

The protein belongs to the cystatin family. Expressed by the venom gland.

Its subcellular location is the secreted. In terms of biological role, inhibits various C1 cysteine proteases including cathepsin L, papain and cathepsin B. This protein has no toxic activity and its function in the venom is unknown. It may play a role as housekeeping or regulatory protein. The protein is Cystatin-1 of Crotalus adamanteus (Eastern diamondback rattlesnake).